The sequence spans 206 residues: Peptidyl-tRNA hydrolase (206 aa).

Residue Tyr14 coordinates tRNA. Residue His19 is the Proton acceptor of the active site. Tyr64, Asn66, and Asn112 together coordinate tRNA.

Belongs to the PTH family. In terms of assembly, monomer.

It localises to the cytoplasm. It carries out the reaction an N-acyl-L-alpha-aminoacyl-tRNA + H2O = an N-acyl-L-amino acid + a tRNA + H(+). Its function is as follows. Hydrolyzes ribosome-free peptidyl-tRNAs (with 1 or more amino acids incorporated), which drop off the ribosome during protein synthesis, or as a result of ribosome stalling. In terms of biological role, catalyzes the release of premature peptidyl moieties from peptidyl-tRNA molecules trapped in stalled 50S ribosomal subunits, and thus maintains levels of free tRNAs and 50S ribosomes. The sequence is that of Peptidyl-tRNA hydrolase from Rhodopseudomonas palustris (strain ATCC BAA-98 / CGA009).